The following is a 119-amino-acid chain: Hemerythrin subunit B (119 aa).

7 residues coordinate Fe cation: His-26, His-55, Glu-59, His-74, His-78, His-107, and Asp-112.

Belongs to the hemerythrin family.

Functionally, hemerythrin is a respiratory protein in blood cells of certain marine worms. The oxygen-binding site in each chain contains two iron atoms. This is Hemerythrin subunit B from Sipunculus nudus (Sipunculan worm).